Consider the following 283-residue polypeptide: Elongation factor Ts (283 aa).

Positions 80-83 (TDFV) are involved in Mg(2+) ion dislocation from EF-Tu.

The protein belongs to the EF-Ts family.

It localises to the cytoplasm. Functionally, associates with the EF-Tu.GDP complex and induces the exchange of GDP to GTP. It remains bound to the aminoacyl-tRNA.EF-Tu.GTP complex up to the GTP hydrolysis stage on the ribosome. The sequence is that of Elongation factor Ts from Pectobacterium carotovorum subsp. carotovorum (strain PC1).